Consider the following 244-residue polypeptide: WUSCHEL-related homeobox 3 (244 aa).

Positions 4 to 68 form a DNA-binding region, homeobox; WUS-type; that stretch reads VASTRWCPTP…NHKARDRQKL (65 aa).

The protein belongs to the WUS homeobox family. Expressed in aerial parts of seedlings, inflorescences and flowers at low level. Expressed in a restricted number of L1 cells at the lateral regions of flower primordia.

Its subcellular location is the nucleus. Functionally, probable transcription factor required to initiate organ founder cells in a lateral domain of shoot meristems. Involved in the lateral sepal axis-dependent development of flowers, probably by regulating the proliferation of L1 cells at the lateral region of flower primordia. Required for the formation of the margin cells of the first and second whorl organs. The sequence is that of WUSCHEL-related homeobox 3 (WOX3) from Arabidopsis thaliana (Mouse-ear cress).